A 186-amino-acid chain; its full sequence is Hydra actinoporin-like toxin 1 (186 aa).

Positions 1–18 (MLLYICLVNLLLPLSVGA) are cleaved as a signal peptide. Residues 29 to 48 (KVGVDAALQQIDDVWKGKTV) form an N-terminal region region. Positions 158 to 160 (RAG) match the Cell attachment site, crucial for protein stability motif.

This sequence belongs to the actinoporin family. HALT subfamily. As to quaternary structure, octamer or nonamer in membranes. Monomer in the soluble state. In vitro, interacts with folate receptor alpha (of target organism). Expressed female germline during oogenesis.

The protein localises to the nematocyst. It is found in the secreted. It localises to the target cell membrane. In terms of biological role, pore-forming protein that forms hydrophilic pores and causes cytolysis. Compared to equinatoxin-2 (AC P61914), it reveals lower cytolysis activity (5-12-fold difference, tested on erythrocytes), a larger pore size (probably 2-3 nm) and different affinity to membrane lipids (100-fold lower affinity to sphingomyelin). Binds to sulfatides (SFT) as well as to the two sphingolipids, lysophosphatidic acid (LPA) and sphingosine-1-phosphate (S1P). It seems to bind more strongly to LPA than to S1P and SFT. Shows cytolytic activity on HeLa cells, with a different potency than its paralogs (from most potent to less potent: HALT-4&gt;HALT-6~HALT-1&gt;HALT-3&gt;HALT-7&gt;HALT-2). Pore formation is a multi-step process that involves specific recognition of membrane lipid by a protein aromatic residues rich region, firm binding to the membrane (mainly driven by hydrophobic interactions) accompanied by the transfer of the N-terminal region to the lipid-water interface and finally pore formation after oligomerization of monomers. In vitro, binds to the folate receptor alpha (FOLR1), a GPI-anchored membrane protein that plays a major role in the uptake of folate/folic acid into cells via endocytosis, suggesting a possible involvement of this receptor in the mechanism of HALT-1-induced cell lysis. In vivo, does not cause visible paralysis in larvae of the blowfly Sarcophaga faculata, the most common arthropod prey of Hydra. This Hydra vulgaris (Hydra) protein is Hydra actinoporin-like toxin 1.